The chain runs to 101 residues: NADH-quinone oxidoreductase subunit K (101 aa).

The next 3 helical transmembrane spans lie at 4–24 (LEHY…GLFL), 30–50 (IVLL…LVAF), and 65–85 (FVLT…VCFF).

The protein belongs to the complex I subunit 4L family. NDH-1 is composed of 14 different subunits. Subunits NuoA, H, J, K, L, M, N constitute the membrane sector of the complex.

The protein localises to the cell inner membrane. The catalysed reaction is a quinone + NADH + 5 H(+)(in) = a quinol + NAD(+) + 4 H(+)(out). In terms of biological role, NDH-1 shuttles electrons from NADH, via FMN and iron-sulfur (Fe-S) centers, to quinones in the respiratory chain. The immediate electron acceptor for the enzyme in this species is believed to be ubiquinone. Couples the redox reaction to proton translocation (for every two electrons transferred, four hydrogen ions are translocated across the cytoplasmic membrane), and thus conserves the redox energy in a proton gradient. In Ruegeria pomeroyi (strain ATCC 700808 / DSM 15171 / DSS-3) (Silicibacter pomeroyi), this protein is NADH-quinone oxidoreductase subunit K.